The chain runs to 101 residues: uncharacterized protein (101 aa).

Residues 1 to 12 (MAAFQHRAKRSK) are compositionally biased toward basic residues. Disordered stretches follow at residues 1 to 30 (MAAF…KKRA) and 65 to 87 (AQDQ…NVDK). The segment covering 65–78 (AQDQRSDAQAQQQR) has biased composition (low complexity).

This is an uncharacterized protein from Eremothecium gossypii (strain ATCC 10895 / CBS 109.51 / FGSC 9923 / NRRL Y-1056) (Yeast).